Here is a 198-residue protein sequence, read N- to C-terminus: Recombination protein RecR (198 aa).

Residues 58 to 73 (CSTCGNFTDTDPCALC) form a C4-type zinc finger. A Toprim domain is found at 81–175 (STICVVEQPK…KVTRIAAGIP (95 aa)).

It belongs to the RecR family.

Functionally, may play a role in DNA repair. It seems to be involved in an RecBC-independent recombinational process of DNA repair. It may act with RecF and RecO. This Clostridium botulinum (strain Alaska E43 / Type E3) protein is Recombination protein RecR.